The chain runs to 298 residues: GTP cyclohydrolase FolE2 (298 aa).

Belongs to the GTP cyclohydrolase IV family.

It catalyses the reaction GTP + H2O = 7,8-dihydroneopterin 3'-triphosphate + formate + H(+). It participates in cofactor biosynthesis; 7,8-dihydroneopterin triphosphate biosynthesis; 7,8-dihydroneopterin triphosphate from GTP: step 1/1. Converts GTP to 7,8-dihydroneopterin triphosphate. The protein is GTP cyclohydrolase FolE2 of Neisseria meningitidis serogroup A / serotype 4A (strain DSM 15465 / Z2491).